Consider the following 223-residue polypeptide: Glutathione S-transferase A1 (223 aa).

At methionine 1 the chain carries N-acetylmethionine. N-acetylalanine; in Glutathione S-transferase A1, N-terminally processed is present on alanine 2. A GST N-terminal domain is found at 3–83 (GKPVLHYFNA…YIATKYDLYG (81 aa)). At lysine 4 the chain carries N6-succinyllysine. Glutathione is bound by residues tyrosine 9, lysine 45, 54–55 (QV), and 67–68 (QT). The GST C-terminal domain maps to 85 to 208 (DMKERALIDM…QPGSQRKPPM (124 aa)).

Belongs to the GST superfamily. Alpha family. Homodimer. As to expression, expressed in the liver, skin and kidney.

The catalysed reaction is RX + glutathione = an S-substituted glutathione + a halide anion + H(+). It carries out the reaction prostaglandin A2 + glutathione = prostaglandin A2-S-(R)-glutathione. The enzyme catalyses prostaglandin J2 + glutathione = prostaglandin J2-S-(R)-glutathione. It catalyses the reaction (13S)-hydroperoxy-(9Z,11E)-octadecadienoate + 2 glutathione = (13S)-hydroxy-(9Z,11E)-octadecadienoate + glutathione disulfide + H2O. The catalysed reaction is androst-5-ene-3,17-dione = androst-4-ene-3,17-dione. Functionally, glutathione S-transferase that catalyzes the nucleophilic attack of the sulfur atom of glutathione on the electrophilic groups of a wide range of exogenous and endogenous compounds. Involved in the formation of glutathione conjugates of both prostaglandin A2 (PGA2) and prostaglandin J2 (PGJ2). It also catalyzes the isomerization of D5-androstene-3,17-dione (AD) into D4-androstene-3,17-dione and may therefore play an important role in hormone biosynthesis. Through its glutathione-dependent peroxidase activity toward the fatty acid hydroperoxide (13S)-hydroperoxy-(9Z,11E)-octadecadienoate/13-HPODE it is also involved in the metabolism of oxidized linoleic acid. The protein is Glutathione S-transferase A1 (Gsta1) of Mus musculus (Mouse).